The following is a 73-amino-acid chain: Beta-defensin 50 (73 aa).

The first 23 residues, 1 to 23 (MKTLHLLLLISGLLSVFVKGVGS), serve as a signal peptide directing secretion. 2 disulfide bridges follow: cysteine 34/cysteine 63 and cysteine 46/cysteine 64.

This sequence belongs to the beta-defensin family.

The protein localises to the secreted. Its function is as follows. Has bactericidal activity. This Rattus norvegicus (Rat) protein is Beta-defensin 50 (Defb50).